The primary structure comprises 916 residues: Calcium homeostasis endoplasmic reticulum protein (916 aa).

The residue at position 1 (Met-1) is an N-acetylmethionine. One copy of the SURP motif repeat lies at 15 to 57 (VIDKLAQFVARNGPEFEKMTMEKQKDNPKFSFLFGGEFYSYYK). Lys-18 is modified (N6-acetyllysine). The 141-residue stretch at 149–289 (ETQLDMNEFD…QLQSPALGLG (141 aa)) folds into the CID domain. Disordered regions lie at residues 336–549 (QQQQ…RFPP) and 601–635 (HPPW…PHIN). The segment covering 354-374 (TPPPPAPPPAPAPAPAIPPTT) has biased composition (pro residues). Polar residues predominate over residues 480 to 501 (WNNQPDAAWNSQFEGPWNSQHE). Residues 525–541 (PFPPHQQHPQFNQPPHP) show a composition bias toward pro residues. Tyr-714 carries the phosphotyrosine modification. The tract at residues 722–878 (RARRRKGQEK…DPIKGGDVRD (157 aa)) is disordered. The segment covering 739–749 (SRSRSKSRGRS) has biased composition (basic residues). Positions 750–766 (SSRSNSRSSKSSGSYSR) are enriched in low complexity. Positions 767–815 (SRSRSCSRSYSRSRSRSRSRSRSSRSRSRSQSRSRSKSYSPGRRRRSRS) are enriched in basic residues. A phosphoserine mark is found at Ser-813, Ser-815, and Ser-817. Position 819 is a phosphothreonine (Thr-819). Phosphoserine is present on Ser-828. The G-patch domain occupies 841-891 (EENKGHQMLVKMGWSGSGGLGAKEQGIQDPIKGGDVRDKWDQYKGVGVALD). Lys-844 participates in a covalent cross-link: Glycyl lysine isopeptide (Lys-Gly) (interchain with G-Cter in SUMO2). Residues Ser-855 and Ser-857 each carry the phosphoserine modification. Lys-872 is covalently cross-linked (Glycyl lysine isopeptide (Lys-Gly) (interchain with G-Cter in SUMO2)). Lys-879 carries the N6-acetyllysine modification. Position 904 is a phosphoserine (Ser-904).

In terms of tissue distribution, expressed in brain, placenta, lung, liver, kidney, pancreas, cardiac and skeletal muscle, and in cultured HEL and Dami cells.

It localises to the cytoplasm. It is found in the perinuclear region. The protein localises to the endoplasmic reticulum. Involved in calcium homeostasis, growth and proliferation. The chain is Calcium homeostasis endoplasmic reticulum protein from Homo sapiens (Human).